A 379-amino-acid polypeptide reads, in one-letter code: Cinnamyl alcohol dehydrogenase 7 (379 aa).

The segment covering M1–Q13 has biased composition (low complexity). Residues M1 to R21 are disordered. C60 contributes to the Zn(2+) binding site. Residue S62 coordinates NADP(+). Residues H82, E83, C113, C116, C119, C127, and C185 each coordinate Zn(2+). NADP(+) is bound by residues T189, G210 to G215, S233 to K238, T273, G297, and S320 to M322.

Belongs to the zinc-containing alcohol dehydrogenase family. Homodimer. Requires Zn(2+) as cofactor. In terms of tissue distribution, expressed in roots, first internodes and panicles. Expressed in the vascular bundles and sclerenchyma cells below the epidermis in leaves and stems.

The enzyme catalyses (E)-cinnamyl alcohol + NADP(+) = (E)-cinnamaldehyde + NADPH + H(+). It catalyses the reaction (E)-coniferol + NADP(+) = (E)-coniferaldehyde + NADPH + H(+). It carries out the reaction (E)-sinapyl alcohol + NADP(+) = (E)-sinapaldehyde + NADPH + H(+). The catalysed reaction is (E)-4-coumaroyl alcohol + NADP(+) = (E)-4-coumaraldehyde + NADPH + H(+). The enzyme catalyses (E)-caffeyl alcohol + NADP(+) = (E)-caffeyl aldehyde + NADPH + H(+). It functions in the pathway aromatic compound metabolism; phenylpropanoid biosynthesis. In terms of biological role, involved in lignin biosynthesis. May catalyze the final step specific for the production of lignin monomers, like coniferyl alcohol, sinapyl alcohol and 4-coumaryl alcohol. The sequence is that of Cinnamyl alcohol dehydrogenase 7 from Oryza sativa subsp. japonica (Rice).